Here is a 276-residue protein sequence, read N- to C-terminus: MAIKKYKPTSNGRRGMTVLDFSEITTDQPEKSLLAPLKKKAGRNNQGKITVRHQGGGHKRQYRIIDFKRDKDGIPGRVATIEYDPNRSANIALINYADGEKRYIIAPKNLKVGMEIMSGPDADIKIGNALPLENIPVGTLVHNIELKPGRGGQLVRAAGTSAQVLGKEGKYVIVRLASGEVRMILGKCRATVGEVGNEQHELVNIGKAGRARWLGIRPTVRGSVMNPVDHPHGGGEGKAPIGRKSPMTPWGKPTLGYKTRKKKNKSDKFIIRRRKK.

The tract at residues 224–276 (VMNPVDHPHGGGEGKAPIGRKSPMTPWGKPTLGYKTRKKKNKSDKFIIRRRKK) is disordered. Over residues 258-276 (KTRKKKNKSDKFIIRRRKK) the composition is skewed to basic residues.

This sequence belongs to the universal ribosomal protein uL2 family. In terms of assembly, part of the 50S ribosomal subunit. Forms a bridge to the 30S subunit in the 70S ribosome.

In terms of biological role, one of the primary rRNA binding proteins. Required for association of the 30S and 50S subunits to form the 70S ribosome, for tRNA binding and peptide bond formation. It has been suggested to have peptidyltransferase activity; this is somewhat controversial. Makes several contacts with the 16S rRNA in the 70S ribosome. This Geobacillus kaustophilus (strain HTA426) protein is Large ribosomal subunit protein uL2.